The primary structure comprises 1040 residues: Protocadherin-10 (1040 aa).

An N-terminal signal peptide occupies residues 1 to 18 (MIVLLLFALLWMVEGVFS). 6 consecutive Cadherin domains span residues 19–122 (QLHY…PPSF), 123–250 (PEPD…VPAF), 251–358 (DQPV…APEI), 359–463 (SFST…APRF), 464–574 (SQPV…APAI), and 582–690 (NGTP…GGGG). The Extracellular segment spans residues 19–715 (QLHYTVQEEQ…GGGETSLDLT (697 aa)). Residues 207 to 223 (GGGGGVGEGGGGGGGAG) show a composition bias toward gly residues. Residues 207-228 (GGGGGVGEGGGGGGGAGLPPQQ) form a disordered region. Asparagine 273 carries N-linked (GlcNAc...) asparagine glycosylation. N-linked (GlcNAc...) asparagine glycosylation occurs at asparagine 557. A compositionally biased stretch (gly residues) spans 686-697 (QGGGGSGGGGSG). Positions 686-708 (QGGGGSGGGGSGEHQRPSRSGGG) are disordered. A helical transmembrane segment spans residues 716–736 (LILIIALGSVSFIFLLAMIVL). The Cytoplasmic segment spans residues 737-1040 (AVRCQKEKKL…PPYLTRKRIC (304 aa)). Residues 899 to 927 (AFQEADIVSSKDSGHGDSEQGDSDHDATN) form a disordered region. Over residues 910 to 926 (DSGHGDSEQGDSDHDAT) the composition is skewed to basic and acidic residues.

In terms of tissue distribution, moderately expressed in all regions of the brain examined, as well as in testis and ovary, and low expression in all other tissues tested.

It is found in the cell membrane. In terms of biological role, potential calcium-dependent cell-adhesion protein. Functionally, (Microbial infection) Acts as a receptor for Western equine encephalitis virus. This Homo sapiens (Human) protein is Protocadherin-10 (PCDH10).